We begin with the raw amino-acid sequence, 120 residues long: Seripauperin-4 (120 aa).

A helical membrane pass occupies residues Ile-7–Ile-24.

The protein belongs to the SRP1/TIP1 family. Seripauperin subfamily.

The protein resides in the membrane. This chain is Seripauperin-4 (PAU4), found in Saccharomyces cerevisiae (strain ATCC 204508 / S288c) (Baker's yeast).